A 28-amino-acid chain; its full sequence is Seed allergenic protein 1 (28 aa).

Residues 1–28 (VTXEEGXYSISDQSKVGEQXIRSPDREM) are disordered.

The protein is Seed allergenic protein 1 of Prunus dulcis (Almond).